Here is a 324-residue protein sequence, read N- to C-terminus: DNA repair and recombination protein RadA (324 aa).

107 to 114 (GEFGSGKS) is an ATP binding site.

The protein belongs to the eukaryotic RecA-like protein family.

In terms of biological role, involved in DNA repair and in homologous recombination. Binds and assemble on single-stranded DNA to form a nucleoprotein filament. Hydrolyzes ATP in a ssDNA-dependent manner and promotes DNA strand exchange between homologous DNA molecules. The polypeptide is DNA repair and recombination protein RadA (Methanoculleus marisnigri (strain ATCC 35101 / DSM 1498 / JR1)).